A 319-amino-acid chain; its full sequence is Malate dehydrogenase (319 aa).

NAD(+)-binding positions include 11–16 (GAGNVG) and D36. Substrate-binding residues include R85 and R91. NAD(+) is bound by residues N98 and 121-123 (VSN). Residues N123 and R154 each coordinate substrate. The Proton acceptor role is filled by H178.

The protein belongs to the LDH/MDH superfamily. MDH type 3 family.

It carries out the reaction (S)-malate + NAD(+) = oxaloacetate + NADH + H(+). Its function is as follows. Catalyzes the reversible oxidation of malate to oxaloacetate. The protein is Malate dehydrogenase of Sulfurimonas denitrificans (strain ATCC 33889 / DSM 1251) (Thiomicrospira denitrificans (strain ATCC 33889 / DSM 1251)).